The chain runs to 389 residues: Endonuclease 8-like 1 (389 aa).

Residue proline 2 is the Schiff-base intermediate with DNA of the active site. Glutamate 3 acts as the Proton donor in catalysis. Residue lysine 54 is the Proton donor; for beta-elimination activity of the active site. Asparagine 176 is a DNA binding site. The interval 278–389 (TIWFQGDPGP…PREAGESSAS (112 aa)) is disordered. Positions 322-333 (SRMRRARKHPPK) are enriched in basic residues. A compositionally biased stretch (polar residues) spans 336–351 (AQQSEGAGLQQNQETP). The segment covering 357–373 (GKRRGQRASTGHRRRPK) has biased composition (basic residues). A compositionally biased stretch (basic and acidic residues) spans 374 to 389 (TIPDTRPREAGESSAS).

Belongs to the FPG family. In terms of tissue distribution, detected in heart, spleen and lung.

The protein localises to the cytoplasm. The protein resides in the cytoskeleton. It localises to the microtubule organizing center. Its subcellular location is the centrosome. It is found in the nucleus. The protein localises to the chromosome. It carries out the reaction 2'-deoxyribonucleotide-(2'-deoxyribose 5'-phosphate)-2'-deoxyribonucleotide-DNA = a 3'-end 2'-deoxyribonucleotide-(2,3-dehydro-2,3-deoxyribose 5'-phosphate)-DNA + a 5'-end 5'-phospho-2'-deoxyribonucleoside-DNA + H(+). Involved in base excision repair of DNA damaged by oxidation or by mutagenic agents. Acts as a DNA glycosylase that recognizes and removes damaged bases. Has a preference for oxidized pyrimidines, such as thymine glycol, formamidopyrimidine (Fapy) and 5-hydroxyuracil. Has marginal activity towards 8-oxoguanine. Has AP (apurinic/apyrimidinic) lyase activity and introduces nicks in the DNA strand. Cleaves the DNA backbone by beta-delta elimination to generate a single-strand break at the site of the removed base with both 3'- and 5'-phosphates. Has DNA glycosylase/lyase activity towards mismatched uracil and thymine, in particular in U:C and T:C mismatches. Specifically binds 5-hydroxymethylcytosine (5hmC), suggesting that it acts as a specific reader of 5hmC. This is Endonuclease 8-like 1 (Neil1) from Mus musculus (Mouse).